Here is a 287-residue protein sequence, read N- to C-terminus: Very long chain fatty acid elongase 4 (287 aa).

The next 3 helical transmembrane spans lie at Ile-33–Met-53, Pro-64–Val-84, and Phe-115–Val-135. The HxxHH motif signature appears at His-145–His-149. His-148 (nucleophile) is an active-site residue. 4 helical membrane-spanning segments follow: residues Leu-150–Phe-170, Thr-172–Met-192, Ile-199–Leu-219, and Leu-241–Tyr-261.

This sequence belongs to the ELO family.

It is found in the membrane. It catalyses the reaction a very-long-chain acyl-CoA + malonyl-CoA + H(+) = a very-long-chain 3-oxoacyl-CoA + CO2 + CoA. Involved in the synthesis of fatty acids. Elongates C16:0 and C18:0 fatty acids to C26:0, with C24:0 being the main product. This chain is Very long chain fatty acid elongase 4, found in Trypanosoma cruzi (strain CL Brener).